The following is a 431-amino-acid chain: Serine hydroxymethyltransferase (431 aa).

Residues leucine 128 and 132–134 each bind (6S)-5,6,7,8-tetrahydrofolate; that span reads GHL. Lysine 237 is modified (N6-(pyridoxal phosphate)lysine).

It belongs to the SHMT family. As to quaternary structure, homodimer. It depends on pyridoxal 5'-phosphate as a cofactor.

It is found in the cytoplasm. It catalyses the reaction (6R)-5,10-methylene-5,6,7,8-tetrahydrofolate + glycine + H2O = (6S)-5,6,7,8-tetrahydrofolate + L-serine. It functions in the pathway one-carbon metabolism; tetrahydrofolate interconversion. It participates in amino-acid biosynthesis; glycine biosynthesis; glycine from L-serine: step 1/1. In terms of biological role, catalyzes the reversible interconversion of serine and glycine with tetrahydrofolate (THF) serving as the one-carbon carrier. This reaction serves as the major source of one-carbon groups required for the biosynthesis of purines, thymidylate, methionine, and other important biomolecules. Also exhibits THF-independent aldolase activity toward beta-hydroxyamino acids, producing glycine and aldehydes, via a retro-aldol mechanism. This is Serine hydroxymethyltransferase from Ruegeria sp. (strain TM1040) (Silicibacter sp.).